We begin with the raw amino-acid sequence, 540 residues long: Light-independent protochlorophyllide reductase subunit B (540 aa).

Asp-36 provides a ligand contact to [4Fe-4S] cluster. Asp-292 acts as the Proton donor in catalysis. 428–429 (GL) provides a ligand contact to substrate. Positions 451-490 (SNVASGVEPSTPSVSSEVSASSSASPEASAPTPSPDGDMV) are disordered. Low complexity predominate over residues 457 to 481 (VEPSTPSVSSEVSASSSASPEASAP).

Belongs to the ChlB/BchB/BchZ family. As to quaternary structure, protochlorophyllide reductase is composed of three subunits; BchL, BchN and BchB. Forms a heterotetramer of two BchB and two BchN subunits. [4Fe-4S] cluster serves as cofactor.

The catalysed reaction is chlorophyllide a + oxidized 2[4Fe-4S]-[ferredoxin] + 2 ADP + 2 phosphate = protochlorophyllide a + reduced 2[4Fe-4S]-[ferredoxin] + 2 ATP + 2 H2O. Its pathway is porphyrin-containing compound metabolism; bacteriochlorophyll biosynthesis (light-independent). Functionally, component of the dark-operative protochlorophyllide reductase (DPOR) that uses Mg-ATP and reduced ferredoxin to reduce ring D of protochlorophyllide (Pchlide) to form chlorophyllide a (Chlide). This reaction is light-independent. The NB-protein (BchN-BchB) is the catalytic component of the complex. The polypeptide is Light-independent protochlorophyllide reductase subunit B (Chlorobium chlorochromatii (strain CaD3)).